Reading from the N-terminus, the 195-residue chain is Ras-related protein Rab-31 (195 aa).

GTP-binding residues include Gly16, Gly18, Lys19, Ser20, Ser21, Asp32, and His33. Position 20 (Ser20) interacts with Mg(2+). Short sequence motifs (switch) lie at residues 30–42 (HFDHNISPTIGAS) and 63–79 (AGQERFHSLAPMYYRGS). Ser36 is modified (phosphoserine). Positions 38, 64, 119, 122, 150, and 151 each coordinate GTP. Thr38 contacts Mg(2+). Residues Cys194 and Cys195 are each lipidated (S-geranylgeranyl cysteine).

The protein belongs to the small GTPase superfamily. Rab family. Interacts (in GDP-bound form) with RIN3 and GAPVD1, which function as guanine exchange factors (GEF). Interacts (in GTP-bound form) with EEA1. Interacts with NGFR. Interacts with EGFR. Interacts with OCRL. Interacts (in GTP-bound form) with APPL2; interaction contributes to or enhances recruitment of APPL2 to the phagosomes; interaction enhances Fc-gamma receptor-mediated phagocytosis through PI3K/Akt signaling in macrophages. Requires Mg(2+) as cofactor. In terms of tissue distribution, detected in brain astrocytes, spleen and intestine (at protein level).

The protein localises to the early endosome. The protein resides in the golgi apparatus. Its subcellular location is the trans-Golgi network. It localises to the trans-Golgi network membrane. It is found in the cytoplasmic vesicle. The protein localises to the phagosome. The protein resides in the phagosome membrane. It catalyses the reaction GTP + H2O = GDP + phosphate + H(+). With respect to regulation, regulated by guanine nucleotide exchange factors (GEFs) including RIN3 and GAPVD1 which promote the exchange of bound GDP for free GTP. Regulated by GTPase activating proteins (GAPs) which increase the GTP hydrolysis activity. Inhibited by GDP dissociation inhibitors (GDIs) which prevent Rab-GDP dissociation. In terms of biological role, the small GTPases Rab are key regulators of intracellular membrane trafficking, from the formation of transport vesicles to their fusion with membranes. Rabs cycle between an inactive GDP-bound form and an active GTP-bound form that is able to recruit to membranes different set of downstream effectors directly responsible for vesicle formation, movement, tethering and fusion. Required for the integrity and for normal function of the Golgi apparatus and the trans-Golgi network. Plays a role in insulin-stimulated translocation of GLUT4 to the cell membrane. Plays a role in the maturation of phagosomes that engulf pathogens, such as S.aureus and Mycobacterium. Plays a role in M6PR transport from the trans-Golgi network to endosomes. Plays a role in the internalization of EGFR from the cell membrane into endosomes. The chain is Ras-related protein Rab-31 from Rattus norvegicus (Rat).